A 486-amino-acid chain; its full sequence is Glutamyl-tRNA(Gln) amidotransferase subunit A (486 aa).

Residues lysine 75 and serine 150 each act as charge relay system in the active site. The active-site Acyl-ester intermediate is the serine 174.

This sequence belongs to the amidase family. GatA subfamily. In terms of assembly, heterotrimer of A, B and C subunits.

It carries out the reaction L-glutamyl-tRNA(Gln) + L-glutamine + ATP + H2O = L-glutaminyl-tRNA(Gln) + L-glutamate + ADP + phosphate + H(+). Allows the formation of correctly charged Gln-tRNA(Gln) through the transamidation of misacylated Glu-tRNA(Gln) in organisms which lack glutaminyl-tRNA synthetase. The reaction takes place in the presence of glutamine and ATP through an activated gamma-phospho-Glu-tRNA(Gln). The protein is Glutamyl-tRNA(Gln) amidotransferase subunit A of Trichormus variabilis (strain ATCC 29413 / PCC 7937) (Anabaena variabilis).